A 347-amino-acid polypeptide reads, in one-letter code: Protein RecA (347 aa).

67 to 74 lines the ATP pocket; it reads GPESSGKT.

This sequence belongs to the RecA family.

Its subcellular location is the cytoplasm. Functionally, can catalyze the hydrolysis of ATP in the presence of single-stranded DNA, the ATP-dependent uptake of single-stranded DNA by duplex DNA, and the ATP-dependent hybridization of homologous single-stranded DNAs. It interacts with LexA causing its activation and leading to its autocatalytic cleavage. The polypeptide is Protein RecA (Sulfurovum sp. (strain NBC37-1)).